The chain runs to 181 residues: UPF0398 protein lin2003 (181 aa).

Belongs to the UPF0398 family.

This is UPF0398 protein lin2003 from Listeria innocua serovar 6a (strain ATCC BAA-680 / CLIP 11262).